The chain runs to 337 residues: MANKNYQMSTGVTAVVQKVVEACQDESKRLDLIEIARSYPPNQLRNMQRTFQAITGTFLDAFLKKHLSKDFESLVLMLYKPRAQLLCELIRGATKGAGTDEKCLVDVLLTIETHEVREIRQLYYQLYNDSLGDVVRKDCGDKYMWAKLINAVATGDRIPRDTHELEEDLVLVRKAIETKGVKKDEVSTWIRIFATYTRADFRQLHKMYSAKYNGDSLRAGVEDEFQGLDEYAFKLAHDFLYDPCCAAAFSMNVAFAGSGSDSNRLNRITAMHFRECKGCKYYYKKVYGQAFDERCATELKGVYGDAIKLLWEPVTVPLLSMDDYQGSEQHRPMTLEL.

4 Annexin repeats span residues 10–80, 81–154, 161–238, and 242–312; these read TGVT…MLYK, PRAQ…AVAT, DTHE…LAHD, and DPCC…LLWE.

The protein belongs to the annexin family.

It is found in the cell projection. The protein resides in the cilium. It localises to the flagellum. Functionally, may function as a calcium-regulated structural element linking phospholipid bilayer and underlying axoneme. This Giardia intestinalis (Giardia lamblia) protein is Annexin E1 (ANXE1).